The sequence spans 642 residues: 4-hydroxy-3-methylbut-2-enyl diphosphate reductase (642 aa).

The segment at 1-282 (MRKVMLAEKA…EEAISKMSEN (282 aa)) is 4-hydroxy-3-methylbut-2-enyl diphosphate reductase. C13 provides a ligand contact to [4Fe-4S] cluster. (2E)-4-hydroxy-3-methylbut-2-enyl diphosphate is bound by residues H42 and H77. Dimethylallyl diphosphate is bound by residues H42 and H77. Isopentenyl diphosphate contacts are provided by H42 and H77. C99 is a [4Fe-4S] cluster binding site. H127 contributes to the (2E)-4-hydroxy-3-methylbut-2-enyl diphosphate binding site. H127 serves as a coordination point for dimethylallyl diphosphate. H127 contributes to the isopentenyl diphosphate binding site. E129 (proton donor) is an active-site residue. Residue T165 participates in (2E)-4-hydroxy-3-methylbut-2-enyl diphosphate binding. A [4Fe-4S] cluster-binding site is contributed by C193. Positions 221, 222, 223, and 266 each coordinate (2E)-4-hydroxy-3-methylbut-2-enyl diphosphate. Dimethylallyl diphosphate is bound by residues S221, S222, N223, and S266. Isopentenyl diphosphate is bound by residues S221, S222, N223, and S266. S1 motif domains lie at 309–377 (GASV…LSVK), 484–552 (GQVV…LSVK), and 569–638 (GSVV…LSIR).

In the N-terminal section; belongs to the IspH family. Requires [4Fe-4S] cluster as cofactor.

The enzyme catalyses isopentenyl diphosphate + 2 oxidized [2Fe-2S]-[ferredoxin] + H2O = (2E)-4-hydroxy-3-methylbut-2-enyl diphosphate + 2 reduced [2Fe-2S]-[ferredoxin] + 2 H(+). It catalyses the reaction dimethylallyl diphosphate + 2 oxidized [2Fe-2S]-[ferredoxin] + H2O = (2E)-4-hydroxy-3-methylbut-2-enyl diphosphate + 2 reduced [2Fe-2S]-[ferredoxin] + 2 H(+). It participates in isoprenoid biosynthesis; dimethylallyl diphosphate biosynthesis; dimethylallyl diphosphate from (2E)-4-hydroxy-3-methylbutenyl diphosphate: step 1/1. Its pathway is isoprenoid biosynthesis; isopentenyl diphosphate biosynthesis via DXP pathway; isopentenyl diphosphate from 1-deoxy-D-xylulose 5-phosphate: step 6/6. In terms of biological role, catalyzes the conversion of 1-hydroxy-2-methyl-2-(E)-butenyl 4-diphosphate (HMBPP) into a mixture of isopentenyl diphosphate (IPP) and dimethylallyl diphosphate (DMAPP). Acts in the terminal step of the DOXP/MEP pathway for isoprenoid precursor biosynthesis. This is 4-hydroxy-3-methylbut-2-enyl diphosphate reductase from Clostridium acetobutylicum (strain ATCC 824 / DSM 792 / JCM 1419 / IAM 19013 / LMG 5710 / NBRC 13948 / NRRL B-527 / VKM B-1787 / 2291 / W).